The chain runs to 543 residues: Chaperonin GroEL 2 (543 aa).

Residues 29–32 (TLGP), 86–90 (DGTTT), Gly413, 478–480 (NAA), and Asp494 each bind ATP.

It belongs to the chaperonin (HSP60) family. As to quaternary structure, forms a cylinder of 14 subunits composed of two heptameric rings stacked back-to-back. Interacts with the co-chaperonin GroES.

It localises to the cytoplasm. It carries out the reaction ATP + H2O + a folded polypeptide = ADP + phosphate + an unfolded polypeptide.. In terms of biological role, together with its co-chaperonin GroES, plays an essential role in assisting protein folding. The GroEL-GroES system forms a nano-cage that allows encapsulation of the non-native substrate proteins and provides a physical environment optimized to promote and accelerate protein folding. The protein is Chaperonin GroEL 2 of Thermosynechococcus vestitus (strain NIES-2133 / IAM M-273 / BP-1).